Here is a 257-residue protein sequence, read N- to C-terminus: Regulator of G-protein signaling 7-binding protein (257 aa).

Disordered regions lie at residues 1 to 45 and 174 to 196; these read MSSA…SAHK and ETPA…WQVS. Residues 32-45 are compositionally biased toward basic and acidic residues; the sequence is DWERRGSGSESAHK. Low complexity predominate over residues 180 to 192; it reads DSSSSPVDSQQHS. Residues 242–247 carry the Nuclear localization signal motif; the sequence is RRRKRR. 2 S-palmitoyl cysteine lipidation sites follow: Cys252 and Cys253.

The protein belongs to the RGS7BP/RGS9BP family. Interacts with 'R7' family proteins RGS6, RGS7, RGS9 and RGS11. Component of some R7-Gbeta5 complex composed of some R7 protein (RGS6, RGS7, RGS9 or RGS11), Gbeta5 (GNB5) and RGS7BP. Palmitoylated. Undergoes rapid palmitoylation turnover. De novo and turnover palmitoylation are both mediated by ZDHHC2. Palmitoylation regulates the cell membrane and nuclear shuttling and the regulation of GPCR signaling. Upon depalmitoylation, it is targeted from the plasma membrane into the nucleus. GPCR signaling inhibits depalmitoylation and promotes localization to the plasma membrane.

Its subcellular location is the nucleus. The protein localises to the cytoplasm. It is found in the cell membrane. In terms of biological role, regulator of G protein-coupled receptor (GPCR) signaling. Regulatory subunit of the R7-Gbeta5 complexes that acts by controlling the subcellular location of the R7-Gbeta5 complexes. When palmitoylated, it targets the R7-Gbeta5 complexes to the plasma membrane, leading to inhibit G protein alpha subunits. When it is unpalmitoylated, the R7-Gbeta5 complexes undergo a nuclear/cytoplasmic shuttling. May also act by controlling the proteolytic stability of R7 proteins, probably by protecting them from degradation. The protein is Regulator of G-protein signaling 7-binding protein (RGS7BP) of Homo sapiens (Human).